Here is a 362-residue protein sequence, read N- to C-terminus: Somatostatin receptor type 5 (362 aa).

The segment covering 1 to 10 (MEPLSLTSTP) has biased composition (polar residues). The segment at 1 to 24 (MEPLSLTSTPSWNASAASSSSHNW) is disordered. At 1 to 35 (MEPLSLTSTPSWNASAASSSSHNWSLVDPVSPMGA) the chain is on the extracellular side. A compositionally biased stretch (low complexity) spans 11-24 (SWNASAASSSSHNW). N-linked (GlcNAc...) asparagine glycosylation is found at Asn-13 and Asn-23. Residues 36-63 (RAVLVPVLYLLVCTVGLGGNTLVIYVVL) traverse the membrane as a helical segment. Topologically, residues 64-73 (RYAKMKTVTN) are cytoplasmic. The helical transmembrane segment at 74–99 (VYILNLAVADVLFMLGLPFLATQNAV) threads the bilayer. At 100–110 (SYWPFGSFLCR) the chain is on the extracellular side. A disulfide bridge links Cys-109 with Cys-184. Residues 111–132 (LVMTLDGINQFTSIFCLMVMSV) form a helical membrane-spanning segment. Topologically, residues 133 to 154 (DRYLAVVHPLRSARWRRPRVAK) are cytoplasmic. The chain crosses the membrane as a helical span at residues 155–175 (LASAAVWVFSLLMSLPLLVFA). At 176–195 (DVQEGWGTCNLSWPEPVGLW) the chain is on the extracellular side. Asn-185 carries an N-linked (GlcNAc...) asparagine glycan. Residues 196-220 (GAAFITYTSVLGFFGPLLVICLCYL) traverse the membrane as a helical segment. At 221 to 246 (LIVVKVKAAGMRVGSSRRRRSERKVT) the chain is on the cytoplasmic side. Residues 247–272 (RMVVVVVLVFVGCWLPFFIVNIVNLA) form a helical membrane-spanning segment. Residues 273–282 (FTLPEEPTSA) lie on the Extracellular side of the membrane. A helical membrane pass occupies residues 283–307 (GLYFFVVVLSYANSCANPLLYGFLS). Residues 308 to 362 (DNFRQSFRKALCLRRGYGVEDADAIEPRPDKSGRPQTTLPTRSCEANGLMQTSRL) lie on the Cytoplasmic side of the membrane. A lipid anchor (S-palmitoyl cysteine; by ZDHHC5) is attached at Cys-319. Positions 330 to 362 (DAIEPRPDKSGRPQTTLPTRSCEANGLMQTSRL) are disordered.

It belongs to the G-protein coupled receptor 1 family. As to quaternary structure, heterodimer with SSTR2. Heterodimerization with SSTR2 increases cell growth inhibition activity of SSTR2. In terms of processing, palmitoylated at Cys-319 by ZDHHC5, but not ZDHHC8. Palmitoylation creates an additional intracellular loop which is thought to be important for efficient coupling to G-proteins and may target the protein to lipid rafts. As to expression, expressed in adult brain but not in liver, heart, spleen, or kidney.

Its subcellular location is the cell membrane. Receptor for somatostatin-28. The activity of this receptor is mediated by G proteins which inhibit adenylyl cyclase. Increases cell growth inhibition activity of SSTR2 following heterodimerization. The polypeptide is Somatostatin receptor type 5 (Sstr5) (Mus musculus (Mouse)).